Reading from the N-terminus, the 131-residue chain is Insertion element iso-IS1n protein InsB (131 aa).

It belongs to the transposase 27 family.

In terms of biological role, absolutely required for transposition of IS1. The protein is Insertion element iso-IS1n protein InsB (insB) of Shigella dysenteriae.